The sequence spans 932 residues: LPS-assembly protein LptD (932 aa).

Positions Met-1–Ala-33 are cleaved as a signal peptide. The disordered stretch occupies residues Pro-54–Leu-87.

The protein belongs to the LptD family. As to quaternary structure, component of the lipopolysaccharide transport and assembly complex. Interacts with LptE and LptA.

The protein localises to the cell outer membrane. In terms of biological role, together with LptE, is involved in the assembly of lipopolysaccharide (LPS) at the surface of the outer membrane. This Pseudomonas putida (strain GB-1) protein is LPS-assembly protein LptD.